The following is a 457-amino-acid chain: Siroheme synthase (457 aa).

The segment at 1–204 (MDHLPIFCQL…ADEKAVNATT (204 aa)) is precorrin-2 dehydrogenase /sirohydrochlorin ferrochelatase. NAD(+) is bound by residues 22 to 23 (DV) and 43 to 44 (LT). Position 128 is a phosphoserine (S128). Residues 216-457 (GEVVLVGAGP…RDKLNWFSSH (242 aa)) form a uroporphyrinogen-III C-methyltransferase region. Residue P225 participates in S-adenosyl-L-methionine binding. Catalysis depends on D248, which acts as the Proton acceptor. K270 (proton donor) is an active-site residue. Residues 301-303 (GGD), I306, 331-332 (TA), M382, and G411 contribute to the S-adenosyl-L-methionine site.

The protein in the N-terminal section; belongs to the precorrin-2 dehydrogenase / sirohydrochlorin ferrochelatase family. In the C-terminal section; belongs to the precorrin methyltransferase family.

It catalyses the reaction uroporphyrinogen III + 2 S-adenosyl-L-methionine = precorrin-2 + 2 S-adenosyl-L-homocysteine + H(+). It carries out the reaction precorrin-2 + NAD(+) = sirohydrochlorin + NADH + 2 H(+). The enzyme catalyses siroheme + 2 H(+) = sirohydrochlorin + Fe(2+). It functions in the pathway cofactor biosynthesis; adenosylcobalamin biosynthesis; precorrin-2 from uroporphyrinogen III: step 1/1. The protein operates within cofactor biosynthesis; adenosylcobalamin biosynthesis; sirohydrochlorin from precorrin-2: step 1/1. Its pathway is porphyrin-containing compound metabolism; siroheme biosynthesis; precorrin-2 from uroporphyrinogen III: step 1/1. It participates in porphyrin-containing compound metabolism; siroheme biosynthesis; siroheme from sirohydrochlorin: step 1/1. It functions in the pathway porphyrin-containing compound metabolism; siroheme biosynthesis; sirohydrochlorin from precorrin-2: step 1/1. Its function is as follows. Multifunctional enzyme that catalyzes the SAM-dependent methylations of uroporphyrinogen III at position C-2 and C-7 to form precorrin-2 via precorrin-1. Then it catalyzes the NAD-dependent ring dehydrogenation of precorrin-2 to yield sirohydrochlorin. Finally, it catalyzes the ferrochelation of sirohydrochlorin to yield siroheme. The polypeptide is Siroheme synthase (Salmonella arizonae (strain ATCC BAA-731 / CDC346-86 / RSK2980)).